The primary structure comprises 282 residues: ATP synthase subunit a (282 aa).

The next 6 helical transmembrane spans lie at 38-58 (VDSM…LWLA), 97-117 (FVAP…AMDM), 145-165 (VVPT…LLLC), 187-207 (FGSH…EFVA), 225-247 (LIFI…GHIV), and 261-281 (TLQA…AHEG).

Belongs to the ATPase A chain family. As to quaternary structure, F-type ATPases have 2 components, CF(1) - the catalytic core - and CF(0) - the membrane proton channel. CF(1) has five subunits: alpha(3), beta(3), gamma(1), delta(1), epsilon(1). CF(0) has three main subunits: a(1), b(2) and c(9-12). The alpha and beta chains form an alternating ring which encloses part of the gamma chain. CF(1) is attached to CF(0) by a central stalk formed by the gamma and epsilon chains, while a peripheral stalk is formed by the delta and b chains.

It localises to the cell inner membrane. In terms of biological role, key component of the proton channel; it plays a direct role in the translocation of protons across the membrane. The polypeptide is ATP synthase subunit a (Azoarcus sp. (strain BH72)).